Reading from the N-terminus, the 252-residue chain is 2-succinyl-6-hydroxy-2,4-cyclohexadiene-1-carboxylate synthase (252 aa).

The protein belongs to the AB hydrolase superfamily. MenH family. Monomer.

The catalysed reaction is 5-enolpyruvoyl-6-hydroxy-2-succinyl-cyclohex-3-ene-1-carboxylate = (1R,6R)-6-hydroxy-2-succinyl-cyclohexa-2,4-diene-1-carboxylate + pyruvate. The protein operates within quinol/quinone metabolism; 1,4-dihydroxy-2-naphthoate biosynthesis; 1,4-dihydroxy-2-naphthoate from chorismate: step 3/7. It functions in the pathway quinol/quinone metabolism; menaquinone biosynthesis. In terms of biological role, catalyzes a proton abstraction reaction that results in 2,5-elimination of pyruvate from 2-succinyl-5-enolpyruvyl-6-hydroxy-3-cyclohexene-1-carboxylate (SEPHCHC) and the formation of 2-succinyl-6-hydroxy-2,4-cyclohexadiene-1-carboxylate (SHCHC). This Klebsiella pneumoniae (strain 342) protein is 2-succinyl-6-hydroxy-2,4-cyclohexadiene-1-carboxylate synthase.